The following is a 112-amino-acid chain: Large ribosomal subunit protein eL36y (112 aa).

Positions 79–88 (KLGTHKRAKR) are enriched in basic residues. Positions 79–112 (KLGTHKRAKRKREEMSSVLRKMRSGGGGATEKKK) are disordered. The segment covering 102–112 (SGGGGATEKKK) has biased composition (gly residues).

It belongs to the eukaryotic ribosomal protein eL36 family.

This Arabidopsis thaliana (Mouse-ear cress) protein is Large ribosomal subunit protein eL36y (RPL36B).